We begin with the raw amino-acid sequence, 677 residues long: Threonine--tRNA ligase (677 aa).

One can recognise a TGS domain in the interval 1–59 (MAQATISITVNGEAKEVEATTTGVELFAEDKNIIAVKINGENRDLYTPLNDGDTVDPIA). Positions 255–561 (DHRKLGAEMD…LLEHYAGAFP (307 aa)) are catalytic. Zn(2+) contacts are provided by cysteine 360, histidine 411, and histidine 538.

Belongs to the class-II aminoacyl-tRNA synthetase family. As to quaternary structure, homodimer. Zn(2+) is required as a cofactor.

It localises to the cytoplasm. It catalyses the reaction tRNA(Thr) + L-threonine + ATP = L-threonyl-tRNA(Thr) + AMP + diphosphate + H(+). Its function is as follows. Catalyzes the attachment of threonine to tRNA(Thr) in a two-step reaction: L-threonine is first activated by ATP to form Thr-AMP and then transferred to the acceptor end of tRNA(Thr). Also edits incorrectly charged L-seryl-tRNA(Thr). This Bifidobacterium longum (strain DJO10A) protein is Threonine--tRNA ligase.